The chain runs to 444 residues: MKLRFAPSPTGYLHVGNARLAVANFLFARHNGAKFLLRIDDTDTTRGKPEYEEAIGKDLSWLGLKWDEYVRQSERLDRYAEVIEKLKASGRLYPCFETEYELNAKREARIRAGKAPIYDRAMLKLTADQRARAEANGKTPHWRFRLSDGSRKWQDLVMDECSVKLTAISDPVLVRGDGTILYTLASVIDDLDMGITHIVRGEDHVTNTGVQIDIAEALGAKPDHFTFAHLPLLLDSDGGKLSKRFDSLALKSLRQDGLEPMSIVSYLARVGSSDDPQVMTMDEAIAAYDISHVSKSAARFDMTQLLALNRRALHNLPFEDAKIHLPPEADETFWHAVRGNVDLSAEIPHWWDVVHGTIIPPSQPEDRAFLQHALDTLPAEPWGEETWKDWTNALKEQSGRKGRSLFMPLRLALTGEDAGPELHVLLGLMGRERTVARLRDAIQA.

Residues 7-17 (PSPTGYLHVGN) carry the 'HIGH' region motif. Positions 240–244 (KLSKR) match the 'KMSKS' region motif. Residue K243 participates in ATP binding.

It belongs to the class-I aminoacyl-tRNA synthetase family. Glutamate--tRNA ligase type 1 subfamily. Monomer.

It localises to the cytoplasm. It catalyses the reaction tRNA(Glu) + L-glutamate + ATP = L-glutamyl-tRNA(Glu) + AMP + diphosphate. Its function is as follows. Catalyzes the attachment of glutamate to tRNA(Glu) in a two-step reaction: glutamate is first activated by ATP to form Glu-AMP and then transferred to the acceptor end of tRNA(Glu). The protein is Glutamate--tRNA ligase 2 of Gluconobacter oxydans (strain 621H) (Gluconobacter suboxydans).